A 60-amino-acid polypeptide reads, in one-letter code: MTPAGPAQLLIVALVVIVLFGSNKLPDVARSVGRSMRIFKSEIKEMNKDQIESSDQTLKN.

The helical transmembrane segment at 1–21 (MTPAGPAQLLIVALVVIVLFG) threads the bilayer.

The protein belongs to the TatA/E family. As to quaternary structure, the Tat system comprises two distinct complexes: a TatABC complex, containing multiple copies of TatA, TatB and TatC subunits, and a separate TatA complex, containing only TatA subunits. Substrates initially bind to the TatABC complex, which probably triggers association of the separate TatA complex to form the active translocon.

The protein resides in the cell membrane. Its function is as follows. Part of the twin-arginine translocation (Tat) system that transports large folded proteins containing a characteristic twin-arginine motif in their signal peptide across membranes. TatA could form the protein-conducting channel of the Tat system. The sequence is that of Sec-independent protein translocase protein TatA from Corynebacterium glutamicum (strain R).